The following is a 541-amino-acid chain: Probable malate:quinone oxidoreductase (541 aa).

Positions alanine 520–leucine 541 are disordered.

This sequence belongs to the MQO family. FAD serves as cofactor.

The catalysed reaction is (S)-malate + a quinone = a quinol + oxaloacetate. Its pathway is carbohydrate metabolism; tricarboxylic acid cycle; oxaloacetate from (S)-malate (quinone route): step 1/1. This Ralstonia nicotianae (strain ATCC BAA-1114 / GMI1000) (Ralstonia solanacearum) protein is Probable malate:quinone oxidoreductase.